The primary structure comprises 698 residues: Elongation factor G (698 aa).

The tr-type G domain occupies 10–285 (DKTRNIGIMA…GVVDYLPSPL (276 aa)). Residues 19–26 (AHIDAGKT), 83–87 (DTPGH), and 137–140 (NKMD) contribute to the GTP site.

It belongs to the TRAFAC class translation factor GTPase superfamily. Classic translation factor GTPase family. EF-G/EF-2 subfamily.

The protein resides in the cytoplasm. Catalyzes the GTP-dependent ribosomal translocation step during translation elongation. During this step, the ribosome changes from the pre-translocational (PRE) to the post-translocational (POST) state as the newly formed A-site-bound peptidyl-tRNA and P-site-bound deacylated tRNA move to the P and E sites, respectively. Catalyzes the coordinated movement of the two tRNA molecules, the mRNA and conformational changes in the ribosome. The chain is Elongation factor G from Lactobacillus johnsonii (strain CNCM I-12250 / La1 / NCC 533).